The following is a 474-amino-acid chain: MVQQRHVLLITYPAQGHINPALQFAQRLLRMGIQVTLATSVYALSRMKKSSGSTPKGLTFATFSDGYDDGFRPKGVDHTEYMSSLAKQGSNTLRNVINTSADQGCPVTCLVYTLLLPWAATVARECHIPSALLWIQPVAVMDIYYYYFRGYEDDVKNNSNDPTWSIQFPGLPSMKAKDLPSFILPSSDNIYSFALPTFKKQLETLDEEERPKVLVNTFDALEPQALKAIESYNLIAIGPLTPSAFLDGKDPSETSFSGDLFQKSKDYKEWLNSRPAGSVVYVSFGSLLTLPKQQMEEIARGLLKSGRPFLWVIRAKENGEEEKEEDRLICMEELEEQGMIVPWCSQIEVLTHPSLGCFVTHCGWNSTLETLVCGVPVVAFPHWTDQGTNAKLIEDVWETGVRVVPNEDGTVESDEIKRCIETVMDDGEKGVELKRNAKKWKELAREAMQEDGSSDKNLKAFVEDAGKGYQAESN.

The N-terminal 45 residues, 1–45 (MVQQRHVLLITYPAQGHINPALQFAQRLLRMGIQVTLATSVYALS), are a transit peptide targeting the chloroplast. H17 serves as the catalytic Proton acceptor. H17 is a binding site for an anthocyanidin. Positions 346, 361, 364, 365, 366, 369, 385, and 386 each coordinate UDP-alpha-D-glucose.

The protein belongs to the UDP-glycosyltransferase family. As to expression, ubiquitous.

It is found in the plastid. The protein resides in the chloroplast. The catalysed reaction is crocetin + UDP-alpha-D-glucose = beta-D-glucosyl crocetin + UDP. It carries out the reaction beta-D-glucosyl crocetin + UDP-alpha-D-glucose = bis(beta-D-glucosyl) crocetin + UDP. The enzyme catalyses beta-D-gentiobiosyl crocetin + UDP-alpha-D-glucose = beta-D-gentiobiosyl beta-D-glucosyl crocetin + UDP. Glucosyltransferase acting on a broad range of substrates, including crocetin, 4-coumaric acid, caffeic acid and ferulic acid. No activity with indol-3-acetic acid, bixin and norbixin, and no formation of O-glucosides. Involved with UGT94E5 in sequential glycosylation of crocetin to crocin (bis(beta-D-gentiobiosyl) crocetin). This Gardenia jasminoides (Cape jasmine) protein is Crocetin glucosyltransferase, chloroplastic (UGT75L6).